The chain runs to 147 residues: MEKKFYLVREDVLPEAMKKVVLAKQLLERKKAASVAEAAQLANISRGVFYKYRDAIFPFQAVTKENIVTLFFHLEDRSGTLSQLLGVVAAAGCNVLTIHQTIPLQGRANVTLSVSTNDMNEEIDELLAKLKQLEFVEKVEIVGSGVY.

One can recognise an ACT domain in the interval 69–144; that stretch reads TLFFHLEDRS…FVEKVEIVGS (76 aa).

The protein belongs to the UPF0735 family.

This Geobacillus kaustophilus (strain HTA426) protein is UPF0735 ACT domain-containing protein GK2605.